Reading from the N-terminus, the 469-residue chain is Diaminopimelate decarboxylase (469 aa).

The disordered stretch occupies residues 1–23; sequence MLSTEMPLPTTGSTLLKTPASPS. K93 bears the N6-(pyridoxal phosphate)lysine mark. Residues G279 and 321-324 each bind pyridoxal 5'-phosphate; that span reads EPGR. Substrate contacts are provided by R324, R361, and Y365. C392 acts as the Proton donor in catalysis. Substrate is bound by residues E393 and Y421. Y421 provides a ligand contact to pyridoxal 5'-phosphate.

It belongs to the Orn/Lys/Arg decarboxylase class-II family. LysA subfamily. Homodimer. Pyridoxal 5'-phosphate serves as cofactor.

It carries out the reaction meso-2,6-diaminopimelate + H(+) = L-lysine + CO2. Its pathway is amino-acid biosynthesis; L-lysine biosynthesis via DAP pathway; L-lysine from DL-2,6-diaminopimelate: step 1/1. In terms of biological role, specifically catalyzes the decarboxylation of meso-diaminopimelate (meso-DAP) to L-lysine. This Synechocystis sp. (strain ATCC 27184 / PCC 6803 / Kazusa) protein is Diaminopimelate decarboxylase.